A 186-amino-acid polypeptide reads, in one-letter code: Ribosome-recycling factor (186 aa).

The protein belongs to the RRF family.

It is found in the cytoplasm. Functionally, responsible for the release of ribosomes from messenger RNA at the termination of protein biosynthesis. May increase the efficiency of translation by recycling ribosomes from one round of translation to another. The polypeptide is Ribosome-recycling factor (Brucella melitensis biotype 2 (strain ATCC 23457)).